Here is a 57-residue protein sequence, read N- to C-terminus: UPF0391 membrane protein BRADO2787 (57 aa).

2 consecutive transmembrane segments (helical) span residues 6-26 (WALL…TGVS) and 35-55 (ILFY…LTIF).

This sequence belongs to the UPF0391 family.

The protein localises to the cell membrane. The chain is UPF0391 membrane protein BRADO2787 from Bradyrhizobium sp. (strain ORS 278).